Here is a 627-residue protein sequence, read N- to C-terminus: Probable inactive L-type lectin-domain containing receptor kinase III.1 (627 aa).

Residues methionine 1–serine 23 form the signal peptide. At glutamine 24–methionine 303 the chain is on the extracellular side. The interval glutamate 26 to asparagine 262 is legume-lectin like. Asparagine 57, asparagine 78, asparagine 127, asparagine 184, asparagine 202, asparagine 209, and asparagine 230 each carry an N-linked (GlcNAc...) asparagine glycan. A disordered region spans residues isoleucine 272–lysine 297. Residues leucine 278–proline 292 show a composition bias toward pro residues. N-linked (GlcNAc...) asparagine glycosylation occurs at asparagine 300. Residues leucine 304–phenylalanine 324 traverse the membrane as a helical segment. Over tryptophan 325 to valine 627 the chain is Cytoplasmic. Residues phenylalanine 353–leucine 623 form the Protein kinase domain. Residues leucine 359–phenylalanine 367 and lysine 381 each bind ATP.

The protein in the C-terminal section; belongs to the protein kinase superfamily. Ser/Thr protein kinase family. In the N-terminal section; belongs to the leguminous lectin family.

The protein resides in the cell membrane. The sequence is that of Probable inactive L-type lectin-domain containing receptor kinase III.1 (LECRK31) from Arabidopsis thaliana (Mouse-ear cress).